The following is a 112-amino-acid chain: Peptidyl-prolyl cis-trans isomerase FKBP12 (112 aa).

The tract at residues 1-26 is disordered; the sequence is MGVEKQVIRPGNGPKPAPGQTVTVHC. Residues 19 to 112 form the PPIase FKBP-type domain; sequence GQTVTVHCTG…DFEIEVLSVQ (94 aa). Cys-26 and Cys-80 are disulfide-bonded.

This sequence belongs to the FKBP-type PPIase family. Interacts with FIP37 and with the immunosuppressive drug FK506. Its interaction with FIP37 is inhibited by FK506. Interacts with TOR in a rapamycin-dependent manner.

It is found in the cytoplasm. The catalysed reaction is [protein]-peptidylproline (omega=180) = [protein]-peptidylproline (omega=0). Functionally, PPIases accelerate the folding of proteins. It catalyzes the cis-trans isomerization of proline imidic peptide bonds in oligopeptides. Mediates rapamycin inactivation of TOR protein kinase activity. The polypeptide is Peptidyl-prolyl cis-trans isomerase FKBP12 (FKBP12) (Arabidopsis thaliana (Mouse-ear cress)).